Consider the following 176-residue polypeptide: Probable Brix domain-containing ribosomal biogenesis protein (176 aa).

In terms of domain architecture, Brix spans 6 to 176 (IEIVFTSSRD…QLYDRNKNIN (171 aa)).

In terms of biological role, probably involved in the biogenesis of the ribosome. This is Probable Brix domain-containing ribosomal biogenesis protein from Sulfurisphaera tokodaii (strain DSM 16993 / JCM 10545 / NBRC 100140 / 7) (Sulfolobus tokodaii).